A 157-amino-acid polypeptide reads, in one-letter code: Cyclic pyranopterin monophosphate synthase (157 aa).

Substrate is bound by residues 74-76 (MCH) and 112-113 (ME). Residue D127 is part of the active site.

It belongs to the MoaC family. As to quaternary structure, homohexamer; trimer of dimers.

The catalysed reaction is (8S)-3',8-cyclo-7,8-dihydroguanosine 5'-triphosphate = cyclic pyranopterin phosphate + diphosphate. It participates in cofactor biosynthesis; molybdopterin biosynthesis. Its function is as follows. Catalyzes the conversion of (8S)-3',8-cyclo-7,8-dihydroguanosine 5'-triphosphate to cyclic pyranopterin monophosphate (cPMP). In Campylobacter jejuni subsp. jejuni serotype O:23/36 (strain 81-176), this protein is Cyclic pyranopterin monophosphate synthase.